The sequence spans 87 residues: Glutaredoxin 1 (87 aa).

One can recognise a Glutaredoxin domain in the interval 1–87; that stretch reads MFTVIFGRPG…WAKENLNLFA (87 aa). An intrachain disulfide couples Cys11 to Cys14.

This sequence belongs to the glutaredoxin family. As to quaternary structure, monomer.

In terms of biological role, the disulfide bond functions as an electron carrier in the glutathione-dependent synthesis of deoxyribonucleotides by the enzyme ribonucleotide reductase. In addition, it is also involved in reducing some disulfides in a coupled system with glutathione reductase. This Salmonella typhi protein is Glutaredoxin 1 (grxA).